A 396-amino-acid polypeptide reads, in one-letter code: Tryptophan synthase beta chain (396 aa).

N6-(pyridoxal phosphate)lysine is present on Lys88.

Belongs to the TrpB family. As to quaternary structure, tetramer of two alpha and two beta chains. Pyridoxal 5'-phosphate serves as cofactor.

It carries out the reaction (1S,2R)-1-C-(indol-3-yl)glycerol 3-phosphate + L-serine = D-glyceraldehyde 3-phosphate + L-tryptophan + H2O. Its pathway is amino-acid biosynthesis; L-tryptophan biosynthesis; L-tryptophan from chorismate: step 5/5. In terms of biological role, the beta subunit is responsible for the synthesis of L-tryptophan from indole and L-serine. In Actinobacillus pleuropneumoniae serotype 7 (strain AP76), this protein is Tryptophan synthase beta chain.